A 72-amino-acid chain; its full sequence is Guanine nucleotide-binding protein G(I)/G(S)/G(O) subunit gamma-12 (72 aa).

Ser2 is modified (N-acetylserine). Phosphoserine occurs at positions 10 and 26. Tyr42 carries the post-translational modification Phosphotyrosine. A Phosphoserine modification is found at Ser49. Cys69 bears the Cysteine methyl ester mark. The S-geranylgeranyl cysteine moiety is linked to residue Cys69. A propeptide spans 70–72 (removed in mature form); the sequence is IIL.

It belongs to the G protein gamma family. G proteins are composed of 3 units, alpha, beta and gamma.

The protein resides in the cell membrane. Functionally, guanine nucleotide-binding proteins (G proteins) are involved as a modulator or transducer in various transmembrane signaling systems. The beta and gamma chains are required for the GTPase activity, for replacement of GDP by GTP, and for G protein-effector interaction. The chain is Guanine nucleotide-binding protein G(I)/G(S)/G(O) subunit gamma-12 (Gng12) from Mus musculus (Mouse).